Here is a 427-residue protein sequence, read N- to C-terminus: Mannosylglucosylglycerate synthase (427 aa).

It belongs to the glycosyltransferase group 1 family. Requires Co(2+) as cofactor. Mg(2+) is required as a cofactor. Mn(2+) serves as cofactor. It depends on Ni(2+) as a cofactor.

It catalyses the reaction (2R)-2-O-(alpha-D-glucopyranosyl)-glycerate + GDP-alpha-D-mannose = (2R)-2-O-[alpha-D-mannopyranosyl-(1-&gt;2)-alpha-D-glucopyranosyl]-glycerate + GDP + H(+). In terms of biological role, catalyzes the synthesis of mannosylglucosylglycerate (MGG) from glucosylglycerate (GG) and GDP-mannose. The chain is Mannosylglucosylglycerate synthase from Thermotoga maritima (strain ATCC 43589 / DSM 3109 / JCM 10099 / NBRC 100826 / MSB8).